We begin with the raw amino-acid sequence, 493 residues long: Transcript termination protein A18 (493 aa).

Residues 100 to 256 (MIESKRPLYI…NSIINIAKLS (157 aa)) enclose the Helicase ATP-binding domain. 113-120 (LACGFGKT) contributes to the ATP binding site. The DESH box motif lies at 206 to 209 (DESH).

The protein belongs to the helicase family. Poxviruses subfamily. In terms of assembly, interacts with G2. Might be part of a transcription complex composed at least of G2, A18, and H5.

It localises to the virion. Functionally, DNA helicase which seems to act as a postreplicative transcription termination factor. Involved in ATP-dependent release of nascent RNA. Forms a stable complex with single-stranded DNA, and to a lesser extent RNA. In Vaccinia virus (strain Tian Tan) (VACV), this protein is Transcript termination protein A18.